The following is a 439-amino-acid chain: Histone acetyltransferase GCN5 (439 aa).

2 stretches are compositionally biased toward basic and acidic residues: residues 1–28 (MVTKHQIEEDHLDGATTDPEVKRVKLEN) and 39–59 (ETNKQEGTDKENKGKFEKETE). Positions 1 to 59 (MVTKHQIEEDHLDGATTDPEVKRVKLENNVEEIQPEQAETNKQEGTDKENKGKFEKETE) are disordered. One can recognise an N-acetyltransferase domain in the interval 100-255 (IEFRVVNNDN…GGTLMQCSML (156 aa)). Glu173 serves as the catalytic Proton donor/acceptor. Acetyl-CoA is bound by residues 177–179 (CAI), 184–190 (QVRGYGA), and 216–219 (YAIG). The Bromo domain occupies 327 to 431 (PKRGPHDAAI…KFFNNKVKEI (105 aa)).

Belongs to the acetyltransferase family. GCN5 subfamily. In terms of assembly, component of the 1.8 MDa SAGA (Spt-Ada-Gcn5 acetyltransferase) complex, which is composed of 19 subunits TRA1, SPT7, TAF5, NGG1/ADA3, SGF73, SPT20/ADA5, SPT8, TAF12, TAF6, HFI1/ADA1, UBP8, GCN5, ADA2, SPT3, SGF29, TAF10, TAF9, SGF11 and SUS1. The SAGA complex is composed of 4 modules, namely the HAT (histone acetyltransferase) module (GCN5, ADA2, NGG1/ADA3 and SGF29), the DUB (deubiquitinating) module (UBP8, SGF11, SGF73 and SUS1), the core or TAF (TBP-associated factor) module (TAF5, TAF6, TAF9, TAF10 and TAF12), and the Tra1 or SPT (Suppressor of Ty) module (TRA1, HFI1/ADA1, SPT3, SPT7, SPT8 and SPT20/ADA5). The Tra1/SPT module binds activators, the core module recruits TBP (TATA-binding protein), the HAT module contains the histone H3 acetyltransferase GCN5, and the DUB module comprises the histone H2B deubiquitinase UBP8. Also identified in an altered form of SAGA, named SALSA (SAGA altered, Spt8 absent) or SLIK (SAGA-like) complex, which contains a C-terminal truncated form of SPT7 and is missing SPT8. However, it has been shown that the SAGA and SAGA-like SALSA/SLIK transcriptional coactivators are structurally and biochemically equivalent. Component of the 0.8 MDa ADA complex, a HAT complex distinct from SAGA, which at least consists of ADA2, NGG1/ADA3, AHC1, AHC2, SGF29 and GCN5. Component of an ADA/GCN5 complex that consists of HFI1/ADA1, ADA2, NGG1/ADA3, SPT20/ADA5 and GCN5 and probably is a subcomplex of SAGA.

The protein localises to the nucleus. It localises to the cytoplasm. It catalyses the reaction L-lysyl-[protein] + acetyl-CoA = N(6)-acetyl-L-lysyl-[protein] + CoA + H(+). It carries out the reaction (2E)-butenoyl-CoA + L-lysyl-[protein] = N(6)-(2E)-butenoyl-L-lysyl-[protein] + CoA + H(+). In terms of biological role, histone acetyltransferase that acetylates histone H2B to form H2BK11ac and H2BK16ac, histone H3 to form H3K9ac, H3K14ac, H3K18ac, H3K23ac, H3K27ac and H3K36ac, with a lower preference histone H4 to form H4K8ac and H4K16ac, and contributes to H2A.Z acetylation. Acetylation of histones gives a specific tag for epigenetic transcription activation and elongation. Operates in concert with certain DNA-binding transcriptional activators such as GCN4 or HAP2/3/4. Its acetyltransferase activity seems to be dependent on the association in different multisubunit complexes. Component of the transcription coactivator SAGA complex. SAGA acts as a general cofactor required for essentially all RNA polymerase II transcription. At the promoters, SAGA is required for transcription pre-initiation complex (PIC) recruitment. It influences RNA polymerase II transcriptional activity through different activities such as TBP interaction (via core/TAF module) and promoter selectivity, interaction with transcription activators (via Tra1/SPT module), and chromatin modification through histone acetylation (via HAT module) and deubiquitination (via DUB module). SAGA preferentially acetylates histones H3 (to form H3K9ac, H3K14ac, H3K18ac and H3K23ac) and H2B and deubiquitinates histone H2B. SAGA interacts with DNA via upstream activating sequences (UASs). Also identified in a modified version of SAGA named SALSA or SLIK. The cleavage of SPT7 and the absence of the SPT8 subunit in SLIK neither drive any major conformational differences in its structure compared with SAGA, nor significantly affect HAT, DUB, or DNA-binding activities. Component of the ADA histone acetyltransferase complex, which preferentially acetylates nucleosomal histones H3 (to form H3K14ac and H3K18ac) and H2B. In addition to histone acetyltransferase, can use different acyl-CoA substrates, such as (2E)-butenoyl-CoA (crotonyl-CoA) and is able to mediate histone crotonylation. Controls the metaphase-to-anaphase transition and is required for correct chromosome segregation and centromere/kinetochore function in mitosis. May be involved in response to DNA damage by genotoxic agents. The protein is Histone acetyltransferase GCN5 of Saccharomyces cerevisiae (strain ATCC 204508 / S288c) (Baker's yeast).